Consider the following 420-residue polypeptide: Polyketide biosynthesis 3-hydroxy-3-methylglutaryl-ACP synthase PksG (420 aa).

Glu82 serves as the catalytic Proton donor/acceptor. Catalysis depends on Cys114, which acts as the Acyl-thioester intermediate. Residue His250 is the Proton donor/acceptor of the active site.

It belongs to the thiolase-like superfamily. HMG-CoA synthase family.

The protein resides in the cytoplasm. The enzyme catalyses 3-oxobutanoyl-[ACP] + acetyl-[ACP] + H2O = (3S)-hydroxy-3-methylglutaryl-[ACP] + holo-[ACP] + H(+). The protein operates within antibiotic biosynthesis; bacillaene biosynthesis. Functionally, involved in some intermediate steps for the synthesis of the antibiotic polyketide bacillaene which is involved in secondary metabolism. It catalyzes the aldol condensation between the acetyl group attached to the acyl-carrier-protein AcpK (Ac-AcpK) and a beta-ketothioester polyketide intermediate linked to one of the consecutive thiolation domains of PksL. The polypeptide is Polyketide biosynthesis 3-hydroxy-3-methylglutaryl-ACP synthase PksG (pksG) (Bacillus subtilis (strain 168)).